The sequence spans 35 residues: Photosystem II reaction center protein Psb30 (35 aa).

The helical transmembrane segment at 7 to 27 threads the bilayer; sequence LIANFAALALITLAGPAVIFI.

It belongs to the Psb30/Ycf12 family. As to quaternary structure, PSII is composed of 1 copy each of membrane proteins PsbA, PsbB, PsbC, PsbD, PsbE, PsbF, PsbH, PsbI, PsbJ, PsbK, PsbL, PsbM, PsbT, PsbX, PsbY, PsbZ, Psb30/Ycf12, peripheral proteins of the oxygen-evolving complex and a large number of cofactors. It forms dimeric complexes.

It is found in the plastid. Its subcellular location is the organellar chromatophore thylakoid membrane. A core subunit of photosystem II (PSII), probably helps stabilize the reaction center. The sequence is that of Photosystem II reaction center protein Psb30 from Paulinella chromatophora.